The following is a 1323-amino-acid chain: DNA-directed RNA polymerase subunit beta' (1323 aa).

Residues Cys-60, Cys-62, Cys-75, and Cys-78 each coordinate Zn(2+). Residues Asp-535, Asp-537, and Asp-539 each coordinate Mg(2+). Residues Cys-894, Cys-977, Cys-984, and Cys-987 each contribute to the Zn(2+) site.

This sequence belongs to the RNA polymerase beta' chain family. The RNAP catalytic core consists of 2 alpha, 1 beta, 1 beta' and 1 omega subunit. When a sigma factor is associated with the core the holoenzyme is formed, which can initiate transcription. Mg(2+) is required as a cofactor. The cofactor is Zn(2+).

The catalysed reaction is RNA(n) + a ribonucleoside 5'-triphosphate = RNA(n+1) + diphosphate. In terms of biological role, DNA-dependent RNA polymerase catalyzes the transcription of DNA into RNA using the four ribonucleoside triphosphates as substrates. The polypeptide is DNA-directed RNA polymerase subunit beta' (Corynebacterium jeikeium (strain K411)).